Consider the following 260-residue polypeptide: tRNA pseudouridine synthase C (260 aa).

D54 is an active-site residue.

It belongs to the pseudouridine synthase RluA family.

The catalysed reaction is uridine(65) in tRNA = pseudouridine(65) in tRNA. Its function is as follows. Responsible for synthesis of pseudouridine from uracil-65 in transfer RNAs. This Salmonella typhi protein is tRNA pseudouridine synthase C (truC).